The following is a 383-amino-acid chain: Fatty acid hydroxylase ahd1 (383 aa).

4 helical membrane-spanning segments follow: residues 84–104 (VMGL…NKSW), 123–143 (TVHT…LFAL), 172–192 (LIPV…IIYY), and 214–236 (VAQW…RALH). The Fatty acid hydroxylase domain occupies 217–341 (WLVCLLMEDI…VGLLDAIFKT (125 aa)). Asparagine 342 carries an N-linked (GlcNAc...) asparagine glycan.

It belongs to the sterol desaturase family.

It localises to the membrane. Its pathway is secondary metabolite biosynthesis. In terms of biological role, fatty acid hydroxylase; part of the gene cluster that mediates the biosynthesis of the glycolipid biosurfactant ustilagic acid (UA). UA is a secreted cellobiose glycolipid that is toxic for many microorganisms and confers biocontrol activity to U.maydis. UA consists of 15,16-dihydroxypalmitic or 2,15,16-trihydroxypalmitic acid, which is O-glycosidically linked to cellobiose at its terminal hydroxyl group. In addition, the cellobiose moiety is acetylated and acylated with a short-chain hydroxy fatty acid. UA biosynthesis starts with omega-hydroxylation of palmitic acid catalyzed by the cytochrome P450 monooxygenase cyp1. Terminal hydroxylation of palmitic acid precedes subterminal hydroxylation catalyzed by the cytochrome P450 monooxygenase cyp2. Sequential glucosylation of the hydroxy fatty acid is probably catalyzed by the glycosyltransferase ugt1. The cellobiose lipid is further decorated by acetylation of the proximal glucose residue and by acylation with a short-chain beta-hydroxy fatty acid at the distal glucose residue. The acyltransferase uat1 may be a good candidate for catalyzing either acetylation or acylation of the cellobiose lipid. The fatty acid synthase fas2 may be involved in synthesis of the carbon backbone of the short-chain beta-hydroxy fatty acid esterified to the cellobiose disaccharide. The secreted UA consists of a mixture of both alpha-hydroxylated and non-hydroxylated glycolipids; therefore, alpha-hydroxylation of the long-chain fatty, catalyzed by the fatty acid hydroxylase ahd1, occurs late in UA biosynthesis and may be the last step before secretion. The polypeptide is Fatty acid hydroxylase ahd1 (Mycosarcoma maydis (Corn smut fungus)).